Reading from the N-terminus, the 374-residue chain is C-X-C chemokine receptor type 5 (374 aa).

Over 1 to 57 the chain is Extracellular; the sequence is MNYPLTLDMGSITYNMDDLYKELAFYSNSTEIPLQDSNFCSTVEGPLLTSFKAVFMP. Asn28 carries N-linked (GlcNAc...) asparagine glycosylation. A helical membrane pass occupies residues 58–78; it reads VAYSLIFLLGMMGNILVLVIL. Topologically, residues 79–90 are cytoplasmic; sequence ERHRHTRSSTET. A helical membrane pass occupies residues 91 to 111; sequence FLFHLAVADLLLVFILPFAVA. Residues 112–126 lie on the Extracellular side of the membrane; that stretch reads EGSVGWVLGTFLCKT. An intrachain disulfide couples Cys124 to Cys204. A helical membrane pass occupies residues 127-147; sequence VIALHKINFYCSSLLLACIAV. Over 148-169 the chain is Cytoplasmic; it reads DRYLAIVHAVHAYRRRRLLSIH. A helical transmembrane segment spans residues 170–190; it reads ITCTAIWLAGFLFALPELLFA. At 191–221 the chain is on the extracellular side; the sequence is KVGQPHNNDSLPQCTFSQENEAETRAWFTSR. N-linked (GlcNAc...) asparagine glycosylation occurs at Asn198. The helical transmembrane segment at 222–242 threads the bilayer; the sequence is FLYHIGGFLLPMLVMGWCYVG. The Cytoplasmic portion of the chain corresponds to 243 to 261; the sequence is VVHRLLQAQRRPQRQKAVR. Residues 262–282 traverse the membrane as a helical segment; the sequence is VAILVTSIFFLCWSPYHIVIF. Residues 283–306 lie on the Extracellular side of the membrane; sequence LDTLERLKAVNSSCELSGYLSVAI. Residues 307 to 327 form a helical membrane-spanning segment; it reads TLCEFLGLAHCCLNPMLYTFA. Over 328 to 374 the chain is Cytoplasmic; sequence GVKFRSDLSRLLTKLGCAGPASLCQLFPNWRKSSLSESENATSLTTF.

The protein belongs to the G-protein coupled receptor 1 family. In terms of tissue distribution, mainly in spleen, in resting B-cells.

The protein resides in the cell membrane. Functionally, cytokine receptor that binds to B-lymphocyte chemoattractant (BLC). Involved in B-cell migration into B-cell follicles of spleen and Peyer patches but not into those of mesenteric or peripheral lymph nodes. The protein is C-X-C chemokine receptor type 5 (Cxcr5) of Mus musculus (Mouse).